We begin with the raw amino-acid sequence, 826 residues long: Protein FAM171B (826 aa).

A signal peptide spans 1-32 (MARLCRRVPCTLLLGLAVVLLKARLVPAAARA). Residues 33 to 353 (ELSRSDLSLI…DSKDITAYHT (321 aa)) are Extracellular-facing. The interval 52–71 (QQQQQKQLEEAEEERTEVPG) is disordered. N-linked (GlcNAc...) asparagine glycans are attached at residues N108, N113, N213, and N268. Residues 354-374 (VFLTAILGGTIVIVIGFFAVL) traverse the membrane as a helical segment. Topologically, residues 375–826 (LCYCRDKCGT…REERPLIPIN (452 aa)) are cytoplasmic. Disordered stretches follow at residues 429–448 (NAKN…AETE), 474–493 (QNNY…GSKQ), and 774–826 (HPGE…IPIN). Positions 438 to 448 (QKKEPSKAETE) are enriched in basic and acidic residues. The span at 474–486 (QNNYSRNPTQSLE) shows a compositional bias: polar residues. The segment covering 774 to 786 (HPGEESPGRKSTV) has biased composition (basic and acidic residues). S794 is subject to Phosphoserine. Over residues 805–826 (AKRDSKTNIWKKREERPLIPIN) the composition is skewed to basic and acidic residues.

The protein belongs to the FAM171 family.

The protein localises to the cytoplasmic granule. It is found in the membrane. In Homo sapiens (Human), this protein is Protein FAM171B (FAM171B).